A 230-amino-acid polypeptide reads, in one-letter code: Eukaryotic translation initiation factor 4E-1 (230 aa).

Positions 1–53 are disordered; it reads MVVEDSQKSTITDEQNPSRVDNDDDDLEDGEILEDADDAASAASKPPSAFLRN. Polar residues predominate over residues 8–19; it reads KSTITDEQNPSR. Residues 22 to 38 are compositionally biased toward acidic residues; sequence NDDDDLEDGEILEDADD. Residues 39-49 are compositionally biased toward low complexity; that stretch reads AASAASKPPSA. EIF4G-binding stretches follow at residues 55 to 58 and 65 to 101; these read HPLE and FDNP…NNIH. MRNA contacts are provided by residues 73–78, Lys-105, and 123–124; these read KQAAWG and WE. A disulfide bridge connects residues Cys-128 and Cys-166. An EIF4G-binding region spans residues 149 to 158; the sequence is YTLLAMIGEQ. MRNA contacts are provided by residues 173–178 and 218–222; these read RNRQDK and KKHER.

It belongs to the eukaryotic initiation factor 4E family. In terms of assembly, EIF4F is a multi-subunit complex, the composition of which varies with external and internal environmental conditions. It is composed of at least EIF4A, EIF4E and EIF4G. EIF4E is also known to interact with other partners. In higher plants two isoforms of EIF4F have been identified, named isoform EIF4F and isoform EIF(iso)4F. Isoform EIF4F has subunits p220 and p26, whereas isoform EIF(iso)4F has subunits p82 and p28. As to quaternary structure, (Microbial infection) Interacts with potyvirus viral genome-linked protein (VPg); this interaction is possible in susceptible hosts but impaired in resistant plants. According to the redox status, the Cys-128-Cys-166 disulfide bridge may have a role in regulating protein function by affecting its ability to bind capped mRNA.

The protein localises to the nucleus. Its subcellular location is the cytoplasm. Functionally, component of the protein complex eIF4F, which is involved in the recognition of the mRNA cap, ATP-dependent unwinding of 5'-terminal secondary structure and recruitment of mRNA to the ribosome. Recognizes and binds the 7-methylguanosine-containing mRNA cap during an early step in the initiation of protein synthesis and facilitates ribosome binding by inducing the unwinding of the mRNAs secondary structures. Key component of recessive resistance to potyviruses. (Microbial infection) Susceptibility host factor required for viral infection by recruiting viral RNAs to the host ribosomal complex via an interaction with viral genome-linked protein (VPg). The protein is Eukaryotic translation initiation factor 4E-1 of Phaseolus vulgaris (Kidney bean).